Here is a 305-residue protein sequence, read N- to C-terminus: Homoserine kinase (305 aa).

Residue 90–100 (PLARGLGSSAS) coordinates ATP.

It belongs to the GHMP kinase family. Homoserine kinase subfamily.

Its subcellular location is the cytoplasm. The enzyme catalyses L-homoserine + ATP = O-phospho-L-homoserine + ADP + H(+). Its pathway is amino-acid biosynthesis; L-threonine biosynthesis; L-threonine from L-aspartate: step 4/5. In terms of biological role, catalyzes the ATP-dependent phosphorylation of L-homoserine to L-homoserine phosphate. This Staphylococcus haemolyticus (strain JCSC1435) protein is Homoserine kinase.